The primary structure comprises 150 residues: Large ribosomal subunit protein bL9 (150 aa).

This sequence belongs to the bacterial ribosomal protein bL9 family.

Its function is as follows. Binds to the 23S rRNA. This is Large ribosomal subunit protein bL9 from Buchnera aphidicola subsp. Acyrthosiphon pisum (strain 5A).